Here is a 98-residue protein sequence, read N- to C-terminus: Small ribosomal subunit protein uS19 (98 aa).

The protein belongs to the universal ribosomal protein uS19 family.

Its function is as follows. Protein S19 forms a complex with S13 that binds strongly to the 16S ribosomal RNA. This is Small ribosomal subunit protein uS19 from Chlorobaculum parvum (strain DSM 263 / NCIMB 8327) (Chlorobium vibrioforme subsp. thiosulfatophilum).